Consider the following 91-residue polypeptide: Small ribosomal subunit protein uS19 (91 aa).

It belongs to the universal ribosomal protein uS19 family.

Protein S19 forms a complex with S13 that binds strongly to the 16S ribosomal RNA. This is Small ribosomal subunit protein uS19 from Leptothrix cholodnii (strain ATCC 51168 / LMG 8142 / SP-6) (Leptothrix discophora (strain SP-6)).